Reading from the N-terminus, the 656-residue chain is Heparan-alpha-glucosaminide N-acetyltransferase (656 aa).

The tract at residues 1–31 (MTGGSSSRRRRAEERSSAAGTERNSRREAVG) is disordered. Topologically, residues 1-185 (MTGGSSSRRR…IIVNENPVDS (185 aa)) are lumenal, vesicle. N-linked (GlcNAc...) asparagine glycans are attached at residues asparagine 137 and asparagine 157. The cysteines at positions 146 and 455 are disulfide-linked. The helical transmembrane segment at 186–206 (NLPVSIAFLVGLALIVAVSLL) threads the bilayer. At 207–268 (RLLLSLDDVN…NRLRCVDTFR (62 aa)) the chain is on the cytoplasmic side. The interval 234–253 (SELGSPSRADPLSADYQPET) is disordered. 2 positions are modified to phosphoserine: serine 238 and serine 240. Tyrosine 249 carries the phosphotyrosine modification. The helical transmembrane segment at 269-289 (GLALVLMVFVNYGGGKYWYFK) threads the bilayer. Histidine 290 is a catalytic residue. Over 290-295 (HSSWNG) the chain is Lumenal, vesicle. The helical transmembrane segment at 296–316 (LTVADLVFPWFVFIMGTSIFL) threads the bilayer. The Cytoplasmic portion of the chain corresponds to 317-338 (SMTSILQRGCSKLKLLGKIVWR). The helical transmembrane segment at 339–359 (SFLLICIGVIIVNPNYCLGPL) threads the bilayer. Residues 360–367 (SWDKVRIP) are Lumenal, vesicle-facing. A helical transmembrane segment spans residues 368–388 (GVLQRLGVTYFVVAVLEFFFW). At 389–413 (KPVPDSCTLESSCFSLRDITSSWPQ) the chain is on the cytoplasmic side. The chain crosses the membrane as a helical span at residues 414–434 (WLTILTLESIWLALTFFLPVP). At 435–493 (GCPTGYLGPGGIGDLGKYPHCTGGAAGYIDRLLLGDNHLYQHPSSTVLYHTEVAYDPEG) the chain is on the lumenal, vesicle side. A helical transmembrane segment spans residues 494-514 (VLGTINSIVMAFLGVQAGKIL). Topologically, residues 515–522 (VYYKDQTK) are cytoplasmic. The chain crosses the membrane as a helical span at residues 523–543 (AILTRFAAWCCILGLISIVLT). Over 544 to 557 (KVSANEGFIPINKN) the chain is Lumenal, vesicle. Residues 558-578 (LWSISYVTTLSCFAFFILLIL) traverse the membrane as a helical segment. At 579–585 (YPVVDVK) the chain is on the cytoplasmic side. A helical transmembrane segment spans residues 586-606 (GLWTGTPFFYPGMNSILVYVG). The Lumenal, vesicle segment spans residues 607–627 (HEVLENYFPFQWKLADEQSHK). Residues 628-648 (EHLIQNIVATALWVLIAYVLY) form a helical membrane-spanning segment. The lysosomal targeting region stretch occupies residues 641-656 (VLIAYVLYKKKLFWKI). Residues 649–656 (KKKLFWKI) are Cytoplasmic-facing.

As to quaternary structure, homooligomer. Homooligomerization is necessary for enzyme activity. Post-translationally, undergoes intralysosomal proteolytic cleavage; occurs within the end of the first and/or the beginning of the second luminal domain and is essential for the activation of the enzyme. Glycosylated. In terms of tissue distribution, expressed in the retina.

Its subcellular location is the lysosome membrane. It carries out the reaction alpha-D-glucosaminyl-[heparan sulfate](n) + acetyl-CoA = N-acetyl-alpha-D-glucosaminyl-[heparan sulfate](n) + CoA + H(+). Functionally, lysosomal acetyltransferase that acetylates the non-reducing terminal alpha-glucosamine residue of intralysosomal heparin or heparan sulfate, converting it into a substrate for luminal alpha-N-acetyl glucosaminidase. This chain is Heparan-alpha-glucosaminide N-acetyltransferase (Hgsnat), found in Mus musculus (Mouse).